Reading from the N-terminus, the 455-residue chain is Phosphoglucosamine mutase (455 aa).

The active-site Phosphoserine intermediate is serine 108. Residues serine 108, aspartate 248, aspartate 250, and aspartate 252 each coordinate Mg(2+). Serine 108 carries the phosphoserine modification.

The protein belongs to the phosphohexose mutase family. Mg(2+) is required as a cofactor. In terms of processing, activated by phosphorylation.

The catalysed reaction is alpha-D-glucosamine 1-phosphate = D-glucosamine 6-phosphate. Functionally, catalyzes the conversion of glucosamine-6-phosphate to glucosamine-1-phosphate. The polypeptide is Phosphoglucosamine mutase (Leuconostoc mesenteroides subsp. mesenteroides (strain ATCC 8293 / DSM 20343 / BCRC 11652 / CCM 1803 / JCM 6124 / NCDO 523 / NBRC 100496 / NCIMB 8023 / NCTC 12954 / NRRL B-1118 / 37Y)).